Consider the following 93-residue polypeptide: CRISPR-associated endoribonuclease Cas2 1 (93 aa).

Position 8 (Asp-8) interacts with Mg(2+).

This sequence belongs to the CRISPR-associated endoribonuclease Cas2 protein family. As to quaternary structure, homodimer, forms a heterotetramer with a Cas1 homodimer. Mg(2+) serves as cofactor.

Its function is as follows. CRISPR (clustered regularly interspaced short palindromic repeat), is an adaptive immune system that provides protection against mobile genetic elements (viruses, transposable elements and conjugative plasmids). CRISPR clusters contain sequences complementary to antecedent mobile elements and target invading nucleic acids. CRISPR clusters are transcribed and processed into CRISPR RNA (crRNA). Functions as a ssRNA-specific endoribonuclease. Involved in the integration of spacer DNA into the CRISPR cassette. This Chloroflexus aurantiacus (strain ATCC 29366 / DSM 635 / J-10-fl) protein is CRISPR-associated endoribonuclease Cas2 1.